A 24-amino-acid polypeptide reads, in one-letter code: L-amino-acid oxidase (24 aa).

The protein belongs to the flavin monoamine oxidase family. FIG1 subfamily. As to quaternary structure, homodimer; non-covalently linked. FAD serves as cofactor. Post-translationally, N-glycosylated. Expressed by the venom gland.

The protein localises to the secreted. The enzyme catalyses an L-alpha-amino acid + O2 + H2O = a 2-oxocarboxylate + H2O2 + NH4(+). Functionally, catalyzes an oxidative deamination of predominantly hydrophobic and aromatic L-amino acids, thus producing hydrogen peroxide that may contribute to the diverse toxic effects of this enzyme. Exhibits diverse biological activities, such as hemorrhage, hemolysis, edema, apoptosis, and antiparasitic activities. This protein has antibacterial activity (against E.coli, S.aureus, and B.dysenteriae), cytotoxic activity, as well as an ability to induce platelet aggregation. Effects of snake L-amino oxidases on platelets are controversial, since they either induce aggregation or inhibit agonist-induced aggregation. These different effects are probably due to different experimental conditions. This chain is L-amino-acid oxidase, found in Protobothrops mucrosquamatus (Taiwan habu).